The following is a 74-amino-acid chain: RNA-binding protein Hfq (74 aa).

The 61-residue stretch at 9 to 69 (DQYLNQLRKN…ISTFSPVKNV (61 aa)) folds into the Sm domain.

It belongs to the Hfq family. As to quaternary structure, homohexamer.

RNA chaperone that binds small regulatory RNA (sRNAs) and mRNAs to facilitate mRNA translational regulation in response to envelope stress, environmental stress and changes in metabolite concentrations. Also binds with high specificity to tRNAs. The protein is RNA-binding protein Hfq of Oceanobacillus iheyensis (strain DSM 14371 / CIP 107618 / JCM 11309 / KCTC 3954 / HTE831).